Reading from the N-terminus, the 28-residue chain is TVSENVVKKVEDVMPIATGHEREXLXAQ.

This sequence belongs to the cytochrome c oxidase subunit 5B family. As to quaternary structure, component of the cytochrome c oxidase (complex IV, CIV), a multisubunit enzyme composed of a catalytic core of 3 subunits and several supernumerary subunits. The complex exists as a monomer or a dimer and forms supercomplexes (SCs) in the inner mitochondrial membrane with ubiquinol-cytochrome c oxidoreductase (cytochrome b-c1 complex, complex III, CIII).

It localises to the mitochondrion inner membrane. Its pathway is energy metabolism; oxidative phosphorylation. Its function is as follows. Component of the cytochrome c oxidase, the last enzyme in the mitochondrial electron transport chain which drives oxidative phosphorylation. The respiratory chain contains 3 multisubunit complexes succinate dehydrogenase (complex II, CII), ubiquinol-cytochrome c oxidoreductase (cytochrome b-c1 complex, complex III, CIII) and cytochrome c oxidase (complex IV, CIV), that cooperate to transfer electrons derived from NADH and succinate to molecular oxygen, creating an electrochemical gradient over the inner membrane that drives transmembrane transport and the ATP synthase. Cytochrome c oxidase is the component of the respiratory chain that catalyzes the reduction of oxygen to water. Electrons originating from reduced cytochrome c in the intermembrane space (IMS) are transferred via the dinuclear copper A center (CU(A)) of subunit 2 and heme A of subunit 1 to the active site in subunit 1, a binuclear center (BNC) formed by heme A3 and copper B (CU(B)). The BNC reduces molecular oxygen to 2 water molecules using 4 electrons from cytochrome c in the IMS and 4 protons from the mitochondrial matrix. In Solanum tuberosum (Potato), this protein is Cytochrome c oxidase subunit 5B, mitochondrial.